The sequence spans 151 residues: MKCPYCAYGESKVVDSRSTEDGSSIRRRRECLKCNRRYTTYEKIETTPILVIKKNMSREYFDRNKIVNGLMKACQKRPVSRKQIEQIANEVERHISNEMLTEVNTDKIGQIIMKNLKKIDEVSYVRFASVYRQFKDINTFMEEIKNLMDKN.

Residues Cys3–Cys34 fold into a zinc finger. Residues Ile49–Thr139 enclose the ATP-cone domain.

The protein belongs to the NrdR family. Zn(2+) is required as a cofactor.

In terms of biological role, negatively regulates transcription of bacterial ribonucleotide reductase nrd genes and operons by binding to NrdR-boxes. The protein is Transcriptional repressor NrdR of Clostridium botulinum (strain ATCC 19397 / Type A).